A 736-amino-acid chain; its full sequence is Fidgetin (736 aa).

Disordered stretches follow at residues 118–155, 180–248, 272–295, and 341–438; these read GMTPALPPPDVTASVGSSTGVASSLSEPSYSSSNCGNH, TYSG…YSPG, IPGYSYQSHNHAPIAPTPLNGSSA, and STRG…AEEQ. The span at 128-150 shows a compositional bias: low complexity; that stretch reads VTASVGSSTGVASSLSEPSYSSS. A compositionally biased stretch (pro residues) spans 205 to 214; it reads QPPPPPPPTL. Positions 216–232 are enriched in low complexity; that stretch reads PSYNTSSPNLSSYNYPP. The segment covering 352–368 has biased composition (polar residues); the sequence is DTSSLAFKPTKQSMPTD. Residues Ala467 and 507 to 512 each bind ATP; that span reads GTGRTL.

Belongs to the AAA ATPase family.

It localises to the nucleus matrix. The protein resides in the cytoplasm. Its subcellular location is the cytoskeleton. It is found in the microtubule organizing center. The protein localises to the centrosome. Functionally, ATP-dependent microtubule severing protein. Severs microtubules along their length and depolymerizes their ends, primarily the minus-end, suppressing microtubule growth from and attachment to centrosomes. Microtubule severing may promote rapid reorganization of cellular microtubule arrays and the release of microtubules from the centrosome following nucleation. Microtubule release from the mitotic spindle poles may allow depolymerization of the microtubule end proximal to the spindle pole, leading to poleward microtubule flux and poleward motion of chromosome. This Danio rerio (Zebrafish) protein is Fidgetin (fign).